The chain runs to 581 residues: Tricyclene synthase Oc15, chloroplastic (581 aa).

Residues 1–68 constitute a chloroplast transit peptide; sequence MAFCISYVGA…ALCLNEHSLS (68 aa). Residues Asn-27, Asn-206, and Asn-319 are each glycosylated (N-linked (GlcNAc...) asparagine). Positions 338 and 342 each coordinate Mg(2+). A DDXXD motif motif is present at residues 338–342; that stretch reads DDIFD. N-linked (GlcNAc...) asparagine glycosylation is found at Asn-384 and Asn-465. Mg(2+) is bound by residues Asn-482, Ser-486, and Glu-490. An N-linked (GlcNAc...) asparagine glycan is attached at Asn-509.

It belongs to the terpene synthase family. Tpsg subfamily. The cofactor is Mg(2+). Requires Mn(2+) as cofactor. Accumulates in flowers; mostly expressed in both upper and lower petal lobes, and, to a lower extent, in tube and stamens.

It is found in the plastid. The protein localises to the chloroplast stroma. The enzyme catalyses (2E)-geranyl diphosphate = tricyclene + diphosphate. It catalyses the reaction (2E)-geranyl diphosphate = beta-myrcene + diphosphate. The protein operates within secondary metabolite biosynthesis; terpenoid biosynthesis. Contributes to floral scent emission. This chain is Tricyclene synthase Oc15, chloroplastic (Oc15), found in Antirrhinum majus (Garden snapdragon).